Here is a 24-residue protein sequence, read N- to C-terminus: Grammistin Pp 4b (24 aa).

As to quaternary structure, exists as aggregates of 3-4 molecules. In terms of tissue distribution, expressed by the skin glands.

Its subcellular location is the secreted. Its function is as follows. Thanks to its abundant amphiphilic alpha-helices, it may integrate into membrane phospholipids, leading to lysis of the membrane. Its hemolytic activity is inhibited by phospholipids, but not by cholesterol. Has antibacterial activity with a broad spectrum against various species of bacteria including both Gram-positive and Gram-negative groups. Also has ichthyotoxic activity. The sequence is that of Grammistin Pp 4b from Pogonoperca punctata (Clown grouper).